The chain runs to 400 residues: CCA-adding enzyme (400 aa).

Glycine 28 and arginine 31 together coordinate ATP. CTP contacts are provided by glycine 28 and arginine 31. Positions 41 and 43 each coordinate Mg(2+). Residues arginine 112, aspartate 155, arginine 158, arginine 161, and arginine 164 each coordinate ATP. CTP contacts are provided by arginine 112, aspartate 155, arginine 158, arginine 161, and arginine 164.

It belongs to the tRNA nucleotidyltransferase/poly(A) polymerase family. Bacterial CCA-adding enzyme type 3 subfamily. In terms of assembly, homodimer. It depends on Mg(2+) as a cofactor.

The catalysed reaction is a tRNA precursor + 2 CTP + ATP = a tRNA with a 3' CCA end + 3 diphosphate. The enzyme catalyses a tRNA with a 3' CCA end + 2 CTP + ATP = a tRNA with a 3' CCACCA end + 3 diphosphate. Functionally, catalyzes the addition and repair of the essential 3'-terminal CCA sequence in tRNAs without using a nucleic acid template. Adds these three nucleotides in the order of C, C, and A to the tRNA nucleotide-73, using CTP and ATP as substrates and producing inorganic pyrophosphate. tRNA 3'-terminal CCA addition is required both for tRNA processing and repair. Also involved in tRNA surveillance by mediating tandem CCA addition to generate a CCACCA at the 3' terminus of unstable tRNAs. While stable tRNAs receive only 3'-terminal CCA, unstable tRNAs are marked with CCACCA and rapidly degraded. The polypeptide is CCA-adding enzyme (Staphylococcus aureus (strain Mu3 / ATCC 700698)).